The primary structure comprises 249 residues: MPFEIVFEGAKEFAQLIETASRLIDEAAFKVTEEGISMRAMDPSRVVLIDLNLPASIFSKYEVDGEETIGVNMDHLKKVLKRGKAKETLILRKGEENFLEISLQGTATRTFKLPLIDVEEIEVDLPELPFTAKVVILGDVIKEAVKDASLVSDSMKFIAKENEFTMRAEGETQEVEVKLTLEDEGLLDIEVQEETKSAYGISYLSDMVKGLGKADEVTIKFGNEMPMQMEYYIRDEGRLIFLLAPRVEE.

It belongs to the PCNA family. The subunits circularize to form a toroid; DNA passes through its center. Replication factor C (RFC) is required to load the toroid on the DNA. Homotrimer. Interacts with NucS.

Functionally, sliding clamp subunit that acts as a moving platform for DNA processing. Responsible for tethering the catalytic subunit of DNA polymerase and other proteins to DNA during high-speed replication. Regulates activity of NucS endonuclease and prevents non-specific cleavage. In Pyrococcus abyssi (strain GE5 / Orsay), this protein is DNA polymerase sliding clamp.